Reading from the N-terminus, the 183-residue chain is MSRGNELVFKAKKTSEKISENIHIFANDPSLAFFRVQEHVRKVTPAIFEKRDEVFQLQNNLQGHCYDMEYGIQALRTIEKSESIFENIQEMIKASIFLKQQLKYEESRKKVKKDSTKSSVYKRFSAHLALDLPDLPDFGGVMRETSQRMENMIGPGTATGRTEAQAATSSNPGELQRSYTTLH.

The disordered stretch occupies residues 152–183 (MIGPGTATGRTEAQAATSSNPGELQRSYTTLH). The segment covering 159–183 (TGRTEAQAATSSNPGELQRSYTTLH) has biased composition (polar residues).

Belongs to the BORCS8 family.

It is found in the lysosome membrane. May participate in the coupling of lysosomes to microtubule plus-end-directed kinesin motor. The protein is BLOC-1-related complex subunit 8 homolog of Drosophila melanogaster (Fruit fly).